A 708-amino-acid chain; its full sequence is Polyribonucleotide nucleotidyltransferase (708 aa).

Aspartate 487 and aspartate 493 together coordinate Mg(2+). In terms of domain architecture, KH spans 554-613; sequence PRIHTMKISADKIKDVIGKGGAVIRALTEETGTTIEIEDDGTIKIAATEGAAAKEAIRRI. Residues 623–691 form the S1 motif domain; the sequence is GVIYTGKVAR…RQGRVRLSMK (69 aa).

The protein belongs to the polyribonucleotide nucleotidyltransferase family. Component of the RNA degradosome, which is a multiprotein complex involved in RNA processing and mRNA degradation. Requires Mg(2+) as cofactor.

The protein resides in the cytoplasm. The catalysed reaction is RNA(n+1) + phosphate = RNA(n) + a ribonucleoside 5'-diphosphate. In terms of biological role, involved in mRNA degradation. Catalyzes the phosphorolysis of single-stranded polyribonucleotides processively in the 3'- to 5'-direction. This is Polyribonucleotide nucleotidyltransferase from Vibrio vulnificus (strain CMCP6).